Reading from the N-terminus, the 349-residue chain is MKEVGIVGYGSDLPKYRIKAEDIAGAWGKDAQAIKRGLIVNEKSVPGPDEDTATISVQAARRALSRAGINPKDIGAVYVGSESHPYAVKPTSGIVAEACGVSPDFTAADLEFACKAGTAGIQMCMGLVGSGMMEYAMAVGADTAQGAPGDALEYTAAAGGAAYIIGAKKEELIAKFNGTYSYTTDTPDFWRREHEHYPKHGGRFTGEPAYFKHVLNGAKGMMAKMDTTAKDYDYCVFHQPNGKFYITAAKQLGFTEEQYKYGLLTPYLGNTYSGAVPLGLSNILDHAKADDRIFVVSYGSGAGSDAFDITVTDRISEVVDKEITTEKLLESKKYVDYAVYLKYRGKIRM.

(3S)-3-hydroxy-3-methylglutaryl-CoA is bound by residues Asp-30 and Ala-31. The active-site Proton donor/acceptor is the Glu-82. (3S)-3-hydroxy-3-methylglutaryl-CoA-binding residues include Cys-114 and Thr-155. Cys-114 acts as the Acyl-thioester intermediate in catalysis. Arg-203 serves as a coordination point for CoA. (3S)-3-hydroxy-3-methylglutaryl-CoA is bound by residues Thr-205 and His-238. His-238 (proton donor/acceptor) is an active-site residue. Lys-243 contacts CoA. (3S)-3-hydroxy-3-methylglutaryl-CoA-binding residues include Asn-270 and Ser-300.

This sequence belongs to the thiolase-like superfamily. Archaeal HMG-CoA synthase family. Interacts with acetoacetyl-CoA thiolase that catalyzes the precedent step in the pathway and with a DUF35 protein. The acetoacetyl-CoA thiolase/HMG-CoA synthase complex channels the intermediate via a fused CoA-binding site, which allows for efficient coupling of the endergonic thiolase reaction with the exergonic HMGCS reaction.

It catalyses the reaction acetoacetyl-CoA + acetyl-CoA + H2O = (3S)-3-hydroxy-3-methylglutaryl-CoA + CoA + H(+). Its pathway is metabolic intermediate biosynthesis; (R)-mevalonate biosynthesis; (R)-mevalonate from acetyl-CoA: step 2/3. Catalyzes the condensation of acetyl-CoA with acetoacetyl-CoA to form 3-hydroxy-3-methylglutaryl-CoA (HMG-CoA). Functions in the mevalonate (MVA) pathway leading to isopentenyl diphosphate (IPP), a key precursor for the biosynthesis of isoprenoid compounds that are building blocks of archaeal membrane lipids. In Methanococcus maripaludis (strain C6 / ATCC BAA-1332), this protein is Hydroxymethylglutaryl-CoA synthase.